A 149-amino-acid polypeptide reads, in one-letter code: Thioredoxin-like protein 4B (149 aa).

Belongs to the DIM1 family. In terms of assembly, homodimer. Interacts with the U5-102 kDa protein subunit of the spliceosome.

The protein localises to the nucleus. In terms of biological role, essential role in pre-mRNA splicing. Required in cell cycle progression for S/G(2) transition. This chain is Thioredoxin-like protein 4B (TXNL4B), found in Homo sapiens (Human).